The following is a 330-amino-acid chain: Probable inactive heme oxygenase 2, chloroplastic (330 aa).

Low complexity-rich tracts occupy residues 1-13 (MPLA…SAVV) and 56-69 (AAEA…VDEA). Disordered stretches follow at residues 1–27 (MPLA…RARP), 50–82 (PSPP…YPRQ), and 107–156 (TTLK…LEGE). A chloroplast-targeting transit peptide spans 1 to 47 (MPLAAAVAASAVVPPRPPPPPPRRARPLRSFTGLILTRDLAALTVAR). Over residues 114–151 (TGAEEEVGDGVSEDASASEEEEEEEDDDDVVEEEEEGA) the composition is skewed to acidic residues.

This sequence belongs to the heme oxygenase family.

The protein localises to the plastid. Its subcellular location is the chloroplast. Its function is as follows. Probable inactive heme oxygenase that may play a role in the regulation of phytochrome assembly and photomorphogenesis. The polypeptide is Probable inactive heme oxygenase 2, chloroplastic (HO2) (Oryza sativa subsp. japonica (Rice)).